Consider the following 426-residue polypeptide: Trigger factor (426 aa).

Residues 165-239 (GDVYKLNEAG…ISEIKRLELP (75 aa)) enclose the PPIase FKBP-type domain.

This sequence belongs to the FKBP-type PPIase family. Tig subfamily.

The protein resides in the cytoplasm. The catalysed reaction is [protein]-peptidylproline (omega=180) = [protein]-peptidylproline (omega=0). Functionally, involved in protein export. Acts as a chaperone by maintaining the newly synthesized protein in an open conformation. Functions as a peptidyl-prolyl cis-trans isomerase. In Pelodictyon phaeoclathratiforme (strain DSM 5477 / BU-1), this protein is Trigger factor.